We begin with the raw amino-acid sequence, 586 residues long: Probable lysosomal cobalamin transporter (586 aa).

A run of 9 helical transmembrane segments spans residues 10–30, 47–67, 96–116, 147–167, 191–211, 315–335, 378–398, 420–440, and 509–529; these read IWIAYAVAVGLALFAAIVTTF, VVSLTSLLATVLLLPVDIALV, IVYYSLYSLDALLCLIVIPFA, SGFIILVLILFFVGFFVPAAG, ALTFAVGLLVCLGTLLYVLYT, LVGGILLLLVSVIVWVSMLIT, IIMAFLVLFFFSSSISGLATV, ILIATVMMALIILGINYSIAM, and VFGAVDFWAQVAFLAVFLIVL. N-linked (GlcNAc...) asparagine glycosylation is present at Asn-540.

The protein belongs to the LIMR family. LMBRD1 subfamily.

It is found in the lysosome membrane. Its function is as follows. Probable lysosomal cobalamin transporter. Required to export cobalamin from lysosomes allowing its conversion to cofactors. The sequence is that of Probable lysosomal cobalamin transporter from Pyricularia oryzae (strain 70-15 / ATCC MYA-4617 / FGSC 8958) (Rice blast fungus).